The chain runs to 342 residues: S-adenosylmethionine:tRNA ribosyltransferase-isomerase (342 aa).

This sequence belongs to the QueA family. Monomer.

It localises to the cytoplasm. It carries out the reaction 7-aminomethyl-7-carbaguanosine(34) in tRNA + S-adenosyl-L-methionine = epoxyqueuosine(34) in tRNA + adenine + L-methionine + 2 H(+). It participates in tRNA modification; tRNA-queuosine biosynthesis. Transfers and isomerizes the ribose moiety from AdoMet to the 7-aminomethyl group of 7-deazaguanine (preQ1-tRNA) to give epoxyqueuosine (oQ-tRNA). This chain is S-adenosylmethionine:tRNA ribosyltransferase-isomerase, found in Streptococcus sanguinis (strain SK36).